A 176-amino-acid chain; its full sequence is ATP-dependent protease subunit HslV (176 aa).

The active site involves Thr-2. Na(+) contacts are provided by Gly-157, Cys-160, and Thr-163.

Belongs to the peptidase T1B family. HslV subfamily. As to quaternary structure, a double ring-shaped homohexamer of HslV is capped on each side by a ring-shaped HslU homohexamer. The assembly of the HslU/HslV complex is dependent on binding of ATP.

The protein localises to the cytoplasm. The enzyme catalyses ATP-dependent cleavage of peptide bonds with broad specificity.. Allosterically activated by HslU binding. In terms of biological role, protease subunit of a proteasome-like degradation complex believed to be a general protein degrading machinery. This is ATP-dependent protease subunit HslV from Proteus mirabilis (strain HI4320).